The following is a 396-amino-acid chain: L-lactate dehydrogenase (396 aa).

An FMN hydroxy acid dehydrogenase domain is found at 1 to 380 (MIISAASDYR…SGDSLVQELG (380 aa)). Y24 contacts substrate. 2 residues coordinate FMN: S106 and Q127. Y129 serves as a coordination point for substrate. T155 contacts FMN. Position 164 (R164) interacts with substrate. K251 is a binding site for FMN. The Proton acceptor role is filled by H275. Residue R278 participates in substrate binding. 306–330 (DSGIRNGLDVVRMIALGADTVLLGR) contacts FMN.

The protein belongs to the FMN-dependent alpha-hydroxy acid dehydrogenase family. The cofactor is FMN.

The protein resides in the cell inner membrane. The catalysed reaction is (S)-lactate + A = pyruvate + AH2. In terms of biological role, catalyzes the conversion of L-lactate to pyruvate. Is coupled to the respiratory chain. This Salmonella choleraesuis (strain SC-B67) protein is L-lactate dehydrogenase.